We begin with the raw amino-acid sequence, 302 residues long: Methionyl-tRNA formyltransferase (302 aa).

Residue 108 to 111 (SILP) coordinates (6S)-5,6,7,8-tetrahydrofolate.

Belongs to the Fmt family.

It catalyses the reaction L-methionyl-tRNA(fMet) + (6R)-10-formyltetrahydrofolate = N-formyl-L-methionyl-tRNA(fMet) + (6S)-5,6,7,8-tetrahydrofolate + H(+). Its function is as follows. Attaches a formyl group to the free amino group of methionyl-tRNA(fMet). The formyl group appears to play a dual role in the initiator identity of N-formylmethionyl-tRNA by promoting its recognition by IF2 and preventing the misappropriation of this tRNA by the elongation apparatus. In Sulfurimonas denitrificans (strain ATCC 33889 / DSM 1251) (Thiomicrospira denitrificans (strain ATCC 33889 / DSM 1251)), this protein is Methionyl-tRNA formyltransferase.